Reading from the N-terminus, the 196-residue chain is MKVAVIKYNAGNIRSVDYALKRLGVEAVITSDKEVLKAADKVIFPGVGEAETTMLHLKESGMDRFIKELRQPVLGICLGMQLMCRFSEEGNVDCLGIFDTDVKRFAPRKHEEKVPHMGWNTISCLKSDLFKGFTRDEFVYFVHSYYVPVSEFTAAETDYIRPFSAALHKDNFYATQFHPEKSGEAGERIIKNFLEL.

The region spanning 2-196 is the Glutamine amidotransferase type-1 domain; it reads KVAVIKYNAG…ERIIKNFLEL (195 aa). The Nucleophile role is filled by Cys77. Catalysis depends on residues His178 and Glu180.

In terms of assembly, heterodimer of HisH and HisF.

The protein localises to the cytoplasm. It carries out the reaction 5-[(5-phospho-1-deoxy-D-ribulos-1-ylimino)methylamino]-1-(5-phospho-beta-D-ribosyl)imidazole-4-carboxamide + L-glutamine = D-erythro-1-(imidazol-4-yl)glycerol 3-phosphate + 5-amino-1-(5-phospho-beta-D-ribosyl)imidazole-4-carboxamide + L-glutamate + H(+). It catalyses the reaction L-glutamine + H2O = L-glutamate + NH4(+). It functions in the pathway amino-acid biosynthesis; L-histidine biosynthesis; L-histidine from 5-phospho-alpha-D-ribose 1-diphosphate: step 5/9. Its function is as follows. IGPS catalyzes the conversion of PRFAR and glutamine to IGP, AICAR and glutamate. The HisH subunit catalyzes the hydrolysis of glutamine to glutamate and ammonia as part of the synthesis of IGP and AICAR. The resulting ammonia molecule is channeled to the active site of HisF. This Bacteroides fragilis (strain YCH46) protein is Imidazole glycerol phosphate synthase subunit HisH.